We begin with the raw amino-acid sequence, 357 residues long: 3-isopropylmalate dehydrogenase (357 aa).

77–90 (GPKWDTLPGEKRPE) provides a ligand contact to NAD(+). Residues R97, R107, R136, and D224 each coordinate substrate. Mg(2+)-binding residues include D224, D248, and D252. 282 to 294 (GSAPDIAGQDLAN) contributes to the NAD(+) binding site.

The protein belongs to the isocitrate and isopropylmalate dehydrogenases family. LeuB type 1 subfamily. In terms of assembly, homodimer. Requires Mg(2+) as cofactor. Mn(2+) is required as a cofactor.

It is found in the cytoplasm. The enzyme catalyses (2R,3S)-3-isopropylmalate + NAD(+) = 4-methyl-2-oxopentanoate + CO2 + NADH. Its pathway is amino-acid biosynthesis; L-leucine biosynthesis; L-leucine from 3-methyl-2-oxobutanoate: step 3/4. Catalyzes the oxidation of 3-carboxy-2-hydroxy-4-methylpentanoate (3-isopropylmalate) to 3-carboxy-4-methyl-2-oxopentanoate. The product decarboxylates to 4-methyl-2 oxopentanoate. This is 3-isopropylmalate dehydrogenase from Clostridium acetobutylicum (strain ATCC 824 / DSM 792 / JCM 1419 / IAM 19013 / LMG 5710 / NBRC 13948 / NRRL B-527 / VKM B-1787 / 2291 / W).